We begin with the raw amino-acid sequence, 712 residues long: Ribosomal RNA large subunit methyltransferase K/L (712 aa).

The 112-residue stretch at 42–153 (QALRIVMWSR…KGRASLSIDL (112 aa)) folds into the THUMP domain.

It belongs to the methyltransferase superfamily. RlmKL family.

Its subcellular location is the cytoplasm. It carries out the reaction guanosine(2445) in 23S rRNA + S-adenosyl-L-methionine = N(2)-methylguanosine(2445) in 23S rRNA + S-adenosyl-L-homocysteine + H(+). The enzyme catalyses guanosine(2069) in 23S rRNA + S-adenosyl-L-methionine = N(2)-methylguanosine(2069) in 23S rRNA + S-adenosyl-L-homocysteine + H(+). In terms of biological role, specifically methylates the guanine in position 2445 (m2G2445) and the guanine in position 2069 (m7G2069) of 23S rRNA. This Stenotrophomonas maltophilia (strain R551-3) protein is Ribosomal RNA large subunit methyltransferase K/L.